Consider the following 184-residue polypeptide: Calmodulin-related protein (184 aa).

EF-hand domains follow at residues 8–43 (DQISEFKEAFSLFDKDGDGCITTKELGTVMRSLGQN), 44–79 (PTEAELQDMINEVDADGNGTIDFPEFLNLMARKMKD), 81–116 (DSEEELKEAFRVFDKDQNGFISAAELRHVMTNLGEK), and 117–152 (LTDEEVDEMIREADVDGDGQINYEEFVKVMMANRRR). Positions 21, 23, 25, 27, 32, 57, 59, 61, 63, 68, 94, 96, 98, and 105 each coordinate Ca(2+). The residue at position 116 (lysine 116) is an N6,N6,N6-trimethyllysine. Ca(2+) is bound by residues aspartate 130, aspartate 132, aspartate 134, glutamine 136, and glutamate 141. A disordered region spans residues 156-184 (EESKRSVNSNISRSNNGRKVRKRDRCTIL). A compositionally biased stretch (low complexity) spans 161-170 (SVNSNISRSN). The segment covering 171–184 (NGRKVRKRDRCTIL) has biased composition (basic residues).

This sequence belongs to the calmodulin family.

Calmodulin mediates the control of a large number of enzymes, ion channels and other proteins by Ca(2+). Among the enzymes to be stimulated by the calmodulin-Ca(2+) complex are a number of protein kinases and phosphatases. The protein is Calmodulin-related protein (CAM53) of Petunia hybrida (Petunia).